The following is a 511-amino-acid chain: Glucans biosynthesis protein G (511 aa).

The signal sequence occupies residues 1 to 22 (MMKMRWLSAAVMLTLYTSSSWA).

Belongs to the OpgD/OpgG family.

The protein resides in the periplasm. It participates in glycan metabolism; osmoregulated periplasmic glucan (OPG) biosynthesis. In terms of biological role, involved in the biosynthesis of osmoregulated periplasmic glucans (OPGs). The protein is Glucans biosynthesis protein G of Shigella boydii serotype 4 (strain Sb227).